The primary structure comprises 137 residues: Large ribosomal subunit protein uL16 (137 aa).

It belongs to the universal ribosomal protein uL16 family. In terms of assembly, part of the 50S ribosomal subunit.

Its function is as follows. Binds 23S rRNA and is also seen to make contacts with the A and possibly P site tRNAs. The sequence is that of Large ribosomal subunit protein uL16 from Wolbachia pipientis subsp. Culex pipiens (strain wPip).